A 179-amino-acid chain; its full sequence is uncharacterized protein (179 aa).

A compositionally biased stretch (polar residues) spans 1 to 10 (ATLSAGQPAS). 3 disordered regions span residues 1–35 (ATLS…RGKC), 59–80 (VRRN…PIVT), and 131–179 (ECPT…STCR). Over residues 23 to 33 (LHRHPAPKRRG) the composition is skewed to basic residues. Residues 149 to 158 (TPSRVRRSRR) are compositionally biased toward basic residues.

This is an uncharacterized protein from Human cytomegalovirus (strain AD169) (HHV-5).